The chain runs to 198 residues: dTTP/UTP pyrophosphatase (198 aa).

The active-site Proton acceptor is the Asp75.

It belongs to the Maf family. YhdE subfamily. It depends on a divalent metal cation as a cofactor.

The protein localises to the cytoplasm. The enzyme catalyses dTTP + H2O = dTMP + diphosphate + H(+). The catalysed reaction is UTP + H2O = UMP + diphosphate + H(+). Functionally, nucleoside triphosphate pyrophosphatase that hydrolyzes dTTP and UTP. May have a dual role in cell division arrest and in preventing the incorporation of modified nucleotides into cellular nucleic acids. This is dTTP/UTP pyrophosphatase from Wolbachia sp. subsp. Brugia malayi (strain TRS).